A 485-amino-acid polypeptide reads, in one-letter code: Protein nucleotidyltransferase YdiU (485 aa).

Positions 100, 102, 103, 123, 135, 136, 189, and 196 each coordinate ATP. The active-site Proton acceptor is aspartate 265. Residues asparagine 266 and aspartate 275 each coordinate Mg(2+). Aspartate 275 is a binding site for ATP.

Belongs to the SELO family. Mg(2+) serves as cofactor. The cofactor is Mn(2+).

It carries out the reaction L-seryl-[protein] + ATP = 3-O-(5'-adenylyl)-L-seryl-[protein] + diphosphate. It catalyses the reaction L-threonyl-[protein] + ATP = 3-O-(5'-adenylyl)-L-threonyl-[protein] + diphosphate. The catalysed reaction is L-tyrosyl-[protein] + ATP = O-(5'-adenylyl)-L-tyrosyl-[protein] + diphosphate. The enzyme catalyses L-histidyl-[protein] + UTP = N(tele)-(5'-uridylyl)-L-histidyl-[protein] + diphosphate. It carries out the reaction L-seryl-[protein] + UTP = O-(5'-uridylyl)-L-seryl-[protein] + diphosphate. It catalyses the reaction L-tyrosyl-[protein] + UTP = O-(5'-uridylyl)-L-tyrosyl-[protein] + diphosphate. Nucleotidyltransferase involved in the post-translational modification of proteins. It can catalyze the addition of adenosine monophosphate (AMP) or uridine monophosphate (UMP) to a protein, resulting in modifications known as AMPylation and UMPylation. The chain is Protein nucleotidyltransferase YdiU from Trichormus variabilis (strain ATCC 29413 / PCC 7937) (Anabaena variabilis).